The sequence spans 419 residues: Synaptotagmin-1 (419 aa).

The Vesicular portion of the chain corresponds to 1–58 (MVSESHHEALAAPPVTTVATVLPSNATEPASPGEGKEDAFSKLKEKFMNELHKIPLPP). Asn25 carries N-linked (GlcNAc...) asparagine glycosylation. A helical transmembrane segment spans residues 59–80 (WALIAIAIVAVLLVLTCCFCIC). Residues Cys75, Cys76, Cys78, Cys80, and Cys83 are each lipidated (S-palmitoyl cysteine). At 81-419 (KKCLFKKKNK…EVDAMLAVKK (339 aa)) the chain is on the cytoplasmic side. Positions 108-139 (KDLGKTMKDQDDDAETGLTDGEEKEEPKEEEK) are disordered. The span at 117–131 (QDDDAETGLTDGEEK) shows a compositional bias: acidic residues. Phosphothreonine is present on Thr126. Residues 133-379 (EPKEEEKLGK…AIGKVFVGYN (247 aa)) are phospholipid binding. The 120-residue stretch at 139-258 (KLGKLQYSLD…DFGHVTEEWR (120 aa)) folds into the C2 1 domain. Ca(2+)-binding residues include Leu169, Asp170, and Asp176. Tyr227 is subject to Phosphotyrosine. Ca(2+)-binding residues include Asp228, Phe229, Asp230, Ser233, Lys234, and Asp236. Position 262 is a phosphoserine (Ser262). One can recognise a C2 2 domain in the interval 270–403 (KLGDICFSLR…NPRRPIAQWH (134 aa)). Residues Asp301 and Asp307 each contribute to the Ca(2+) site. Phosphoserine is present on residues Ser340 and Ser342. Positions 361, 363, and 369 each coordinate Ca(2+).

The protein belongs to the synaptotagmin family. As to quaternary structure, homotetramer. Heterodimer; heterodimerizes with SYT2 in presence of calcium. Interacts with SCAMP5. Interacts with STON2. Forms a complex with SV2B, syntaxin 1 and SNAP25. Interacts with SV2A, SV2B and SV2C. Interacts with RIMS1. Interacts with PRRT2. Interacts with DNAJC5 in a phosphorylation-dependent manner. Interacts (via N-terminus) with RAB3A. Interacts with SYT12. Interacts with calmodulin. Interacts with DNM1 (via C-terminal proline-rich domain (PRD)); this interaction facilitates vesicle fission during clathrin-mediated endocytosis (CME). It depends on Ca(2+) as a cofactor. Post-translationally, glycosylated.

The protein resides in the cytoplasmic vesicle. Its subcellular location is the secretory vesicle membrane. It localises to the secretory vesicle. It is found in the synaptic vesicle membrane. The protein localises to the chromaffin granule membrane. The protein resides in the cytoplasm. Calcium sensor that participates in triggering neurotransmitter release at the synapse. May have a regulatory role in the membrane interactions during trafficking of synaptic vesicles at the active zone of the synapse. It binds acidic phospholipids with a specificity that requires the presence of both an acidic head group and a diacyl backbone. A Ca(2+)-dependent interaction between synaptotagmin and putative receptors for activated protein kinase C has also been reported. It can bind to at least three additional proteins in a Ca(2+)-independent manner; these are neurexins, syntaxin and AP2. Plays a role in dendrite formation by melanocytes. The polypeptide is Synaptotagmin-1 (Pongo abelii (Sumatran orangutan)).